We begin with the raw amino-acid sequence, 102 residues long: Auxin-responsive protein SAUR68 (102 aa).

Belongs to the ARG7 family.

Its subcellular location is the cell membrane. Its function is as follows. May promote auxin-stimulated organ elongation, such as hypocotyls, stamen filaments and petals. This is Auxin-responsive protein SAUR68 from Arabidopsis thaliana (Mouse-ear cress).